The chain runs to 258 residues: Small ribosomal subunit protein uS3 (258 aa).

Residues 16–85 (IDEYLEKELE…NPQVEVKEVD (70 aa)) form the KH type-2 domain. The disordered stretch occupies residues 198–258 (RVTETPAEEA…KDADGEESEK (61 aa)). A compositionally biased stretch (acidic residues) spans 203–245 (PAEEASEASEVVEDLEEVEDLEEIEDLEEVEDLEEVEDLEDTE).

This sequence belongs to the universal ribosomal protein uS3 family. Part of the 30S ribosomal subunit.

Its function is as follows. Binds the lower part of the 30S subunit head. The chain is Small ribosomal subunit protein uS3 from Methanothermobacter thermautotrophicus (strain ATCC 29096 / DSM 1053 / JCM 10044 / NBRC 100330 / Delta H) (Methanobacterium thermoautotrophicum).